The following is a 251-amino-acid chain: Transcriptional cofactor Bfc (251 aa).

As to quaternary structure, interacts with srp (via GATA-type Zn-finger domain); this interaction enhances srp binding to the promoter of crq/croquemort.

It is found in the nucleus. Its function is as follows. Transcriptional cofactor involved in efferocytosis. Together with srp mediates expression of the phagocytic receptor crq/croquemort in response to apoptotic cells, and is up-regulated by crq/croquemort in a positive feedback mechanism. Involved in macrophage engulfment and clearance of apoptotic cells during embryogenesis. This is Transcriptional cofactor Bfc from Drosophila melanogaster (Fruit fly).